We begin with the raw amino-acid sequence, 214 residues long: ATP phosphoribosyltransferase (214 aa).

The protein belongs to the ATP phosphoribosyltransferase family. Short subfamily. As to quaternary structure, heteromultimer composed of HisG and HisZ subunits.

It is found in the cytoplasm. It catalyses the reaction 1-(5-phospho-beta-D-ribosyl)-ATP + diphosphate = 5-phospho-alpha-D-ribose 1-diphosphate + ATP. It functions in the pathway amino-acid biosynthesis; L-histidine biosynthesis; L-histidine from 5-phospho-alpha-D-ribose 1-diphosphate: step 1/9. Catalyzes the condensation of ATP and 5-phosphoribose 1-diphosphate to form N'-(5'-phosphoribosyl)-ATP (PR-ATP). Has a crucial role in the pathway because the rate of histidine biosynthesis seems to be controlled primarily by regulation of HisG enzymatic activity. This chain is ATP phosphoribosyltransferase, found in Streptococcus sanguinis (strain SK36).